Reading from the N-terminus, the 342-residue chain is L-threonine 3-dehydrogenase (342 aa).

Cysteine 38 is a binding site for Zn(2+). Active-site charge relay system residues include threonine 40 and histidine 43. Positions 63, 64, 93, 96, 99, and 107 each coordinate Zn(2+). Residues isoleucine 175, aspartate 195, arginine 200, 262 to 264, and 286 to 287 contribute to the NAD(+) site; these read LGI and IY.

This sequence belongs to the zinc-containing alcohol dehydrogenase family. In terms of assembly, homotetramer. Zn(2+) serves as cofactor.

The protein resides in the cytoplasm. The catalysed reaction is L-threonine + NAD(+) = (2S)-2-amino-3-oxobutanoate + NADH + H(+). It participates in amino-acid degradation; L-threonine degradation via oxydo-reductase pathway; glycine from L-threonine: step 1/2. In terms of biological role, catalyzes the NAD(+)-dependent oxidation of L-threonine to 2-amino-3-ketobutyrate. The protein is L-threonine 3-dehydrogenase of Burkholderia multivorans (strain ATCC 17616 / 249).